Here is a 325-residue protein sequence, read N- to C-terminus: Replication factor C small subunit (325 aa).

47 to 54 is an ATP binding site; it reads GPPGTGKT.

This sequence belongs to the activator 1 small subunits family. RfcS subfamily. In terms of assembly, heteromultimer composed of small subunits (RfcS) and large subunits (RfcL).

Part of the RFC clamp loader complex which loads the PCNA sliding clamp onto DNA. The protein is Replication factor C small subunit of Aeropyrum pernix (strain ATCC 700893 / DSM 11879 / JCM 9820 / NBRC 100138 / K1).